The following is a 716-amino-acid chain: uncharacterized protein (716 aa).

Disordered regions lie at residues 84–103 (SPSI…ERYP) and 153–189 (VTDE…SQGQ). The residue at position 97 (serine 97) is a Phosphoserine. Residues lysine 201, lysine 204, lysine 237, lysine 283, and lysine 626 each participate in a glycyl lysine isopeptide (Lys-Gly) (interchain with G-Cter in SUMO2) cross-link.

This is an uncharacterized protein from Mus musculus (Mouse).